The chain runs to 605 residues: Proline--tRNA ligase (605 aa).

This sequence belongs to the class-II aminoacyl-tRNA synthetase family. ProS type 1 subfamily. Homodimer.

It localises to the cytoplasm. It carries out the reaction tRNA(Pro) + L-proline + ATP = L-prolyl-tRNA(Pro) + AMP + diphosphate. In terms of biological role, catalyzes the attachment of proline to tRNA(Pro) in a two-step reaction: proline is first activated by ATP to form Pro-AMP and then transferred to the acceptor end of tRNA(Pro). As ProRS can inadvertently accommodate and process non-cognate amino acids such as alanine and cysteine, to avoid such errors it has two additional distinct editing activities against alanine. One activity is designated as 'pretransfer' editing and involves the tRNA(Pro)-independent hydrolysis of activated Ala-AMP. The other activity is designated 'posttransfer' editing and involves deacylation of mischarged Ala-tRNA(Pro). The misacylated Cys-tRNA(Pro) is not edited by ProRS. The polypeptide is Proline--tRNA ligase (Bifidobacterium adolescentis (strain ATCC 15703 / DSM 20083 / NCTC 11814 / E194a)).